A 126-amino-acid chain; its full sequence is Large ribosomal subunit protein bL12 (126 aa).

Positions 36–55 (APAPAAAPAAGGDQGGAEAA) are enriched in low complexity. The tract at residues 36-57 (APAPAAAPAAGGDQGGAEAAEQ) is disordered.

This sequence belongs to the bacterial ribosomal protein bL12 family. In terms of assembly, homodimer. Part of the ribosomal stalk of the 50S ribosomal subunit. Forms a multimeric L10(L12)X complex, where L10 forms an elongated spine to which 2 to 4 L12 dimers bind in a sequential fashion. Binds GTP-bound translation factors.

Functionally, forms part of the ribosomal stalk which helps the ribosome interact with GTP-bound translation factors. Is thus essential for accurate translation. In Natranaerobius thermophilus (strain ATCC BAA-1301 / DSM 18059 / JW/NM-WN-LF), this protein is Large ribosomal subunit protein bL12.